Reading from the N-terminus, the 674-residue chain is Probable copper-transporting P-type ATPase B (674 aa).

Residues 1 to 22 form a disordered region; the sequence is MNHSNQMHHDNHESHNHHSGHA. The span at 7 to 16 shows a compositional bias: basic and acidic residues; the sequence is MHHDNHESHN. The next 6 helical transmembrane spans lie at 32-52, 57-77, 95-115, 127-147, 284-304, and 315-335; these read FFVSLIFAIPIILLSPLMGIN, FTFPGSEWVVLILSTILFFYG, GMMTLVALGISVAYIYSLYAF, TMDFFWELATLILIMLLGHWI, GYLFYFAVIVGVISFIVWMLI, and LVTVLVIACPHALGLAIPLVT. Aspartate 367 acts as the 4-aspartylphosphate intermediate in catalysis. Mg(2+) is bound by residues aspartate 565 and aspartate 569. 2 consecutive transmembrane segments (helical) span residues 623-645 and 649-671; these read LWWGAGYNIVAVPLAAGALAFVG and SPAVGAILMSLSTVIVAINAFTL.

The protein belongs to the cation transport ATPase (P-type) (TC 3.A.3) family. Type IB subfamily.

Its subcellular location is the cell membrane. The catalysed reaction is Cu(+)(in) + ATP + H2O = Cu(+)(out) + ADP + phosphate + H(+). In terms of biological role, involved in copper transport. In Staphylococcus epidermidis (strain ATCC 12228 / FDA PCI 1200), this protein is Probable copper-transporting P-type ATPase B (copB).